Reading from the N-terminus, the 143-residue chain is Putative pre-16S rRNA nuclease (143 aa).

This sequence belongs to the YqgF nuclease family.

It is found in the cytoplasm. Could be a nuclease involved in processing of the 5'-end of pre-16S rRNA. This is Putative pre-16S rRNA nuclease from Lactococcus lactis subsp. cremoris (strain MG1363).